The following is a 511-amino-acid chain: MSKKFTMTLLSSSLAGLLVMSGGVSAQNGTYSVLQDDSQKSGPVKYGSTYEVVKTVDNGNFRYEVKEKKNDKRTLFKFDSEGNVTVKGKGITHTLHDPALKDFARTAEGKKNEQNGNTPPHKLTDSAVRGVYNKVYGLEKTEITGFSVEDGENGKVSLGSDAKASGEFSVAVGNGARATEKASTAVGSWAAADGKQSTALGVGTYAYANASTALGSVAFVDNTATYGTAAGNRAKVDKDATEGTALGAKATVTNKNSVALGANSVTTRDNEVYIGYKTGTESDKTYGTRVLGGLSDGTRNSDAATVGQLNRKVGGVYDDVKARITVESEKQKKYTDQKTSEVNEKVEARTTVGVDSDGKLTRAEGATKTIAVNDGLVALSGRTDRIDYAVGAIDGRVTRNTQSIEKNSKAIAANTRTLQQHSARLDSQQRQINENHKEMKRAAAQSAALTGLFQPYSVGKFNATAAVGGYSDQQALAVGVGYRFNEQTAAKAGVAFSDGDASWNVGVNFEF.

An N-terminal signal peptide occupies residues 1-26 (MSKKFTMTLLSSSLAGLLVMSGGVSA). A surface exposed passenger domain region spans residues 27–417 (QNGTYSVLQD…SKAIAANTRT (391 aa)). Residues 27-460 (QNGTYSVLQD…GLFQPYSVGK (434 aa)) lie on the Extracellular side of the membrane. Positions 161-287 (DAKASGEFSV…TGTESDKTYG (127 aa)) are head domain. The segment at 288–303 (TRVLGGLSDGTRNSDA) is neck. A right-handed coiled-coil (RHcc) region spans residues 304-349 (ATVGQLNRKVGGVYDDVKARITVESEKQKKYTDQKTSEVNEKVEAR). Residues 304–349 (ATVGQLNRKVGGVYDDVKARITVESEKQKKYTDQKTSEVNEKVEAR) are a coiled coil. The segment at 329-344 (EKQKKYTDQKTSEVNE) is required to bind IgA. Residues 350-375 (TTVGVDSDGKLTRAEGATKTIAVNDG) are saddle domain. Residues 376–441 (LVALSGRTDR…INENHKEMKR (66 aa)) are a coiled coil. The left-handed coiled-coil (LHcc) stretch occupies residues 376 to 441 (LVALSGRTDR…INENHKEMKR (66 aa)). A required to bind IgG region spans residues 384 to 418 (DRIDYAVGAIDGRVTRNTQSIEKNSKAIAANTRTL). The interval 418–460 (LQQHSARLDSQQRQINENHKEMKRAAAQSAALTGLFQPYSVGK) is outer membrane translocation of the passenger domain. Beta stranded transmembrane passes span 461 to 471 (FNATAAVGGYS), 474 to 485 (QALAVGVGYRFN), 488 to 497 (TAAKAGVAFS), and 501 to 511 (ASWNVGVNFEF). Positions 461-511 (FNATAAVGGYSDQQALAVGVGYRFNEQTAAKAGVAFSDGDASWNVGVNFEF) are translocator domain.

It belongs to the autotransporter-2 (AT-2) (TC 1.B.40) family. Eib subfamily. In terms of assembly, homotrimer; can probably form mixed heterotrimers in vivo. Will form mixed heterotrimers with EibA or EibC; these are correctly located in the outer membrane and bind IgG Fc, although less well than homotrimers. In denaturing gels runs as a band of about 210 kDa. Binds the Fc portion of immunoglobulins; binds more than 1 Fc per subunit, can be modeled to bind 3 Fc per trimer.

Its subcellular location is the cell surface. The protein resides in the cell outer membrane. In terms of biological role, binds (in a non-immune fashion) to the Fc portion of human IgA and IgG; binding occurs on the cell surface. Confers the ability to survive exposure to human serum exposure. Binds to the Fc portion of human IgG, IgA and to whole mouse antibodies also via Fc. Upon overexpression cells acquire an extra cell surface layer that forms a zipper-like contact between cells; cells autoagglutinate and form biofilm more readily, suggesting it may play a role in defense against a host. The polypeptide is Immunoglobulin-binding protein EibD (Escherichia coli).